The chain runs to 513 residues: ATP synthase subunit alpha 1 (513 aa).

169 to 176 (GDRQTGKT) contributes to the ATP binding site.

Belongs to the ATPase alpha/beta chains family. F-type ATPases have 2 components, CF(1) - the catalytic core - and CF(0) - the membrane proton channel. CF(1) has five subunits: alpha(3), beta(3), gamma(1), delta(1), epsilon(1). CF(0) has three main subunits: a(1), b(2) and c(9-12). The alpha and beta chains form an alternating ring which encloses part of the gamma chain. CF(1) is attached to CF(0) by a central stalk formed by the gamma and epsilon chains, while a peripheral stalk is formed by the delta and b chains.

The protein resides in the cell inner membrane. It catalyses the reaction ATP + H2O + 4 H(+)(in) = ADP + phosphate + 5 H(+)(out). Its function is as follows. Produces ATP from ADP in the presence of a proton gradient across the membrane. The alpha chain is a regulatory subunit. The sequence is that of ATP synthase subunit alpha 1 from Photobacterium profundum (strain SS9).